A 286-amino-acid chain; its full sequence is Deleted in azoospermia-like-B (286 aa).

The RRM domain maps to asparagine 33–valine 114. Residues alanine 155–glutamine 180 enclose the DAZ domain.

This sequence belongs to the RRM DAZ family. Interacts with the C-terminus of pabp1 and with epabp. Prior to oocyte maturation, found in a complex with epabp and pum2 proteins and spdy1 mRNA; pum2 dissociates from the complex during maturation.

It is found in the cytoplasm. Its function is as follows. RNA-binding protein that is required for primordial germ cell (PGC) differentiation and indirectly necessary for the migration of PGCs through the endoderm. May promote meiotic cell division during spermatogenesis. Shows a preference for G- and U-rich RNAs and probably binds the 3'-UTR of target mRNAs. Stimulates the initiation of translation of mRNAs through the recruitment of poly(A)-binding proteins (PABPs). The sequence is that of Deleted in azoospermia-like-B (dazl-b) from Xenopus laevis (African clawed frog).